Consider the following 240-residue polypeptide: MAFDISVNASKTINALVYFSTQQDKLVIRNEVNDIHYTVEFDRDKVVDTFISYNRHNDSIEIRGVLPEETNIGRVVNTPVSMTYLYNKYSFKPILAEYIRHRNTISGNIYSALMTLDDLVIKQYGDIDLLFNEKLKVDSDSGLFDFVNFVKDMICCDSRIVVALSSLVSKHWELTNKKYRCMALAEHIADSIPISELSRLRYNLCKYLRGHTDSIEDEFDHFEDDDLSTCSAVTDRETDV.

It belongs to the orthopoxvirus OPG176 family. In terms of assembly, tetramer. Interacts with host MYD88, TRF4, TICAM2 and MAL.

BCL2-like protein which disrupts the host immune response by inhibiting the TLR4 signaling pathway leading to NF-kappa-B activation. Acts close to the plasma membrane and targets several host TIR-domain containing adapter proteins including MYD88, TIRAP, TRIF and TICAM2. In turn, blocks the host NF-kappa-B and TRIF-mediated IRF3 activation. The sequence is that of Protein OPG176 (OPG176) from Cynomys gunnisoni (Gunnison's prairie dog).